The sequence spans 259 residues: Type III pantothenate kinase (259 aa).

Residue 6-13 (DTGNTNTV) coordinates ATP. A substrate-binding site is contributed by 107–110 (GPDR). Residue Asp109 is the Proton acceptor of the active site. Asp129 is a binding site for K(+). Thr132 lines the ATP pocket. Thr184 contacts substrate.

It belongs to the type III pantothenate kinase family. Homodimer. It depends on NH4(+) as a cofactor. The cofactor is K(+).

It localises to the cytoplasm. It carries out the reaction (R)-pantothenate + ATP = (R)-4'-phosphopantothenate + ADP + H(+). Its pathway is cofactor biosynthesis; coenzyme A biosynthesis; CoA from (R)-pantothenate: step 1/5. Functionally, catalyzes the phosphorylation of pantothenate (Pan), the first step in CoA biosynthesis. The sequence is that of Type III pantothenate kinase from Paracoccus denitrificans (strain Pd 1222).